Consider the following 299-residue polypeptide: Urease accessory protein UreD (299 aa).

It belongs to the UreD family. UreD, UreF and UreG form a complex that acts as a GTP-hydrolysis-dependent molecular chaperone, activating the urease apoprotein by helping to assemble the nickel containing metallocenter of UreC. The UreE protein probably delivers the nickel.

It is found in the cytoplasm. Its function is as follows. Required for maturation of urease via the functional incorporation of the urease nickel metallocenter. This is Urease accessory protein UreD from Haloarcula marismortui (strain ATCC 43049 / DSM 3752 / JCM 8966 / VKM B-1809) (Halobacterium marismortui).